A 301-amino-acid polypeptide reads, in one-letter code: Ethylmalonyl-CoA decarboxylase (301 aa).

Lysine 211 is modified (N6-acetyllysine; alternate). Lysine 211 carries the N6-succinyllysine; alternate modification. Lysine 295 is subject to N6-succinyllysine.

This sequence belongs to the enoyl-CoA hydratase/isomerase family.

The protein localises to the cytoplasm. Its subcellular location is the cytosol. It catalyses the reaction (2S)-ethylmalonyl-CoA + H(+) = butanoyl-CoA + CO2. The enzyme catalyses (S)-methylmalonyl-CoA + H(+) = propanoyl-CoA + CO2. The catalysed reaction is (2R)-ethylmalonyl-CoA + H(+) = butanoyl-CoA + CO2. Functionally, decarboxylates ethylmalonyl-CoA, a potentially toxic metabolite, to form butyryl-CoA, suggesting it might be involved in metabolite proofreading. Acts preferentially on (S)-ethylmalonyl-CoA but also has some activity on the (R)-isomer. Also has methylmalonyl-CoA decarboxylase activity at lower level. The protein is Ethylmalonyl-CoA decarboxylase (ECHDC1) of Pongo abelii (Sumatran orangutan).